The chain runs to 395 residues: Tyrosine--tRNA ligase (395 aa).

Residues 42 to 51 (PTAPDIHLGH) carry the 'HIGH' region motif. The short motif at 226–230 (KMSKS) is the 'KMSKS' region element. Lys229 is a binding site for ATP. In terms of domain architecture, S4 RNA-binding spans 334–394 (IGLATLLKEA…GKRKFARVTV (61 aa)).

This sequence belongs to the class-I aminoacyl-tRNA synthetase family. TyrS type 2 subfamily. Homodimer.

It localises to the cytoplasm. It catalyses the reaction tRNA(Tyr) + L-tyrosine + ATP = L-tyrosyl-tRNA(Tyr) + AMP + diphosphate + H(+). Its function is as follows. Catalyzes the attachment of tyrosine to tRNA(Tyr) in a two-step reaction: tyrosine is first activated by ATP to form Tyr-AMP and then transferred to the acceptor end of tRNA(Tyr). The chain is Tyrosine--tRNA ligase from Haemophilus influenzae (strain 86-028NP).